The following is a 259-amino-acid chain: ATP synthase subunit a (259 aa).

5 helical membrane passes run 29–49 (TVNIDSMIFSVILGALFIWIF), 90–110 (IAPLALTVFIWVFLMNLMDLI), 134–154 (DVNITMSMALGVFALIIIYSI), 208–228 (LVFILIAGLLPWWSQWLLSVP), and 230–250 (ALFHILVITLQAFIFMVLTIV).

This sequence belongs to the ATPase A chain family. In terms of assembly, F-type ATPases have 2 components, CF(1) - the catalytic core - and CF(0) - the membrane proton channel. CF(1) has five subunits: alpha(3), beta(3), gamma(1), delta(1), epsilon(1). CF(0) has three main subunits: a(1), b(2) and c(9-12). The alpha and beta chains form an alternating ring which encloses part of the gamma chain. CF(1) is attached to CF(0) by a central stalk formed by the gamma and epsilon chains, while a peripheral stalk is formed by the delta and b chains.

It localises to the cell inner membrane. Functionally, key component of the proton channel; it plays a direct role in the translocation of protons across the membrane. The sequence is that of ATP synthase subunit a from Aeromonas salmonicida (strain A449).